The sequence spans 122 residues: Large ribosomal subunit protein uL14 (122 aa).

It belongs to the universal ribosomal protein uL14 family. As to quaternary structure, part of the 50S ribosomal subunit. Forms a cluster with proteins L3 and L19. In the 70S ribosome, L14 and L19 interact and together make contacts with the 16S rRNA in bridges B5 and B8.

In terms of biological role, binds to 23S rRNA. Forms part of two intersubunit bridges in the 70S ribosome. The protein is Large ribosomal subunit protein uL14 of Agathobacter rectalis (strain ATCC 33656 / DSM 3377 / JCM 17463 / KCTC 5835 / VPI 0990) (Eubacterium rectale).